The following is a 96-amino-acid chain: Large ribosomal subunit protein bL25 (96 aa).

Belongs to the bacterial ribosomal protein bL25 family. As to quaternary structure, part of the 50S ribosomal subunit; part of the 5S rRNA/L5/L18/L25 subcomplex. Contacts the 5S rRNA. Binds to the 5S rRNA independently of L5 and L18.

This is one of the proteins that binds to the 5S RNA in the ribosome where it forms part of the central protuberance. The sequence is that of Large ribosomal subunit protein bL25 from Francisella philomiragia subsp. philomiragia (strain ATCC 25017 / CCUG 19701 / FSC 153 / O#319-036).